The primary structure comprises 495 residues: Ribitol 5-phosphate transferase FKRP (495 aa).

Topologically, residues 1 to 6 (MRLTRC) are cytoplasmic. Residues 7–29 (QAALAAAITLNLLVLFYVSWLQH) traverse the membrane as a helical segment. Over 30–495 (QPRNSRARGP…PALLSLTGSG (466 aa)) the chain is Lumenal. Cysteines 168 and 191 form a disulfide. N-linked (GlcNAc...) asparagine glycans are attached at residues N172 and N209. Zn(2+)-binding residues include C289, C296, C317, and C318. Positions 289-318 (CNKETTRCFGTVVGDTPAYLYEERWTPPCC) are zinc finger loop. CDP-L-ribitol is bound by residues G345, R352, 359–364 (WDYDVD), 437–438 (QD), and 480–482 (NPQ). D360, D362, and D364 together coordinate Mg(2+).

Belongs to the LicD transferase family. As to quaternary structure, homodimer; disulfide-linked. Tetramer. Forms a complex composed of FKRP, FKTN/fukutin, and RXYLT1/TMEM5. Also exists as large multimeric protein complexes. May interact with the dystrophin-glycoprotein complex (DGC). It depends on Mg(2+) as a cofactor. In terms of processing, N-glycosylated. In terms of tissue distribution, expressed in the retina (at protein level). Expressed predominantly in skeletal muscle, placenta, and heart and relatively weakly in brain, lung, liver, kidney, and pancreas.

The protein resides in the golgi apparatus membrane. Its subcellular location is the secreted. It is found in the cell membrane. It localises to the sarcolemma. The protein localises to the rough endoplasmic reticulum. The protein resides in the cytoplasm. The enzyme catalyses 3-O-[Rib-ol-P-3-beta-D-GalNAc-(1-&gt;3)-beta-D-GlcNAc-(1-&gt;4)-(O-6-P-alpha-D-Man)]-Thr-[protein] + CDP-L-ribitol = 3-O-[Rib-ol-P-Rib-ol-P-3-beta-D-GalNAc-(1-&gt;3)-beta-D-GlcNAc-(1-&gt;4)-(O-6-P-alpha-D-Man)]-Thr-[protein] + CMP + H(+). It participates in protein modification; protein glycosylation. In terms of biological role, catalyzes the transfer of a ribitol 5-phosphate from CDP-L-ribitol to the ribitol 5-phosphate previously attached by FKTN/fukutin to the phosphorylated O-mannosyl trisaccharide (N-acetylgalactosamine-beta-3-N-acetylglucosamine-beta-4-(phosphate-6-)mannose), a carbohydrate structure present in alpha-dystroglycan (DAG1). This constitutes the second step in the formation of the ribose 5-phosphate tandem repeat which links the phosphorylated O-mannosyl trisaccharide to the ligand binding moiety composed of repeats of 3-xylosyl-alpha-1,3-glucuronic acid-beta-1. The sequence is that of Ribitol 5-phosphate transferase FKRP from Homo sapiens (Human).